The primary structure comprises 392 residues: Queuine tRNA-ribosyltransferase (392 aa).

Asp93 acts as the Proton acceptor in catalysis. Substrate-binding positions include 93–97 (DSGGY), Asp147, Gln189, and Gly216. The RNA binding stretch occupies residues 247–253 (GVGAPED). The Nucleophile role is filled by Asp266. The RNA binding; important for wobble base 34 recognition stretch occupies residues 271-275 (TRVAR). Cys304, Cys306, Cys309, and His335 together coordinate Zn(2+).

This sequence belongs to the queuine tRNA-ribosyltransferase family. In terms of assembly, homodimer. Within each dimer, one monomer is responsible for RNA recognition and catalysis, while the other monomer binds to the replacement base PreQ1. Zn(2+) is required as a cofactor.

The enzyme catalyses 7-aminomethyl-7-carbaguanine + guanosine(34) in tRNA = 7-aminomethyl-7-carbaguanosine(34) in tRNA + guanine. Its pathway is tRNA modification; tRNA-queuosine biosynthesis. Its function is as follows. Catalyzes the base-exchange of a guanine (G) residue with the queuine precursor 7-aminomethyl-7-deazaguanine (PreQ1) at position 34 (anticodon wobble position) in tRNAs with GU(N) anticodons (tRNA-Asp, -Asn, -His and -Tyr). Catalysis occurs through a double-displacement mechanism. The nucleophile active site attacks the C1' of nucleotide 34 to detach the guanine base from the RNA, forming a covalent enzyme-RNA intermediate. The proton acceptor active site deprotonates the incoming PreQ1, allowing a nucleophilic attack on the C1' of the ribose to form the product. After dissociation, two additional enzymatic reactions on the tRNA convert PreQ1 to queuine (Q), resulting in the hypermodified nucleoside queuosine (7-(((4,5-cis-dihydroxy-2-cyclopenten-1-yl)amino)methyl)-7-deazaguanosine). This is Queuine tRNA-ribosyltransferase from Dehalococcoides mccartyi (strain ATCC BAA-2100 / JCM 16839 / KCTC 5957 / BAV1).